Consider the following 246-residue polypeptide: Small ribosomal subunit protein uS3 (246 aa).

Positions 19–98 (IDEWLAQNFY…NPMLDARVQA (80 aa)) constitute a KH type-2 domain. Positions 218 to 246 (LQEETASTLREHMEAARPGEEHEEDREES) are disordered. The span at 226–237 (LREHMEAARPGE) shows a compositional bias: basic and acidic residues.

It belongs to the universal ribosomal protein uS3 family. In terms of assembly, part of the 30S ribosomal subunit.

Functionally, binds the lower part of the 30S subunit head. The sequence is that of Small ribosomal subunit protein uS3 from Aeropyrum pernix (strain ATCC 700893 / DSM 11879 / JCM 9820 / NBRC 100138 / K1).